The following is a 508-amino-acid chain: MGLPWYRVHTVVLNDPGRLLSVHIMHTALVSGWAGSMALYELAVFDPSDPVLDPMWRQGMFVIPFMTRLGITNSWGGWSITGGTVTNPGIWSYEGVAGAHIVFSGLCFLAAIWHWVYWDLEIFCDERTGKPSLDLPKIFGIHLFLSGVACFGFGAFHVTGLYGPGIWVSDPYGLTGKVQPVNPSWGAEGFDPFVPGGIASHHIAAGTLGILAGLFHLSVRPPQRLYKALRMGNIETVLSSSIAAVFFAAFVVAGTMWYGSATTPIELFGPTRYQWDQGYFQQEIYRRVNAGLAENLSLSESWSKIPDKLAFYDYIGNNPAKGGLFRAGSMDNGDGIAVGWLGHPVFRDKEGHELFVRRMPTFFETFPVVLVDGDGIVRADVPFRRAESKYSVEQVGVTVEFYGGELDGVSYNDPATVKKYARRAQLGEIFELDRATLKSDGVFRSSPRGWFTFGHASFALLFFFGHIWHGARTLFRDVFAGIDPDLDAQVEFGAFQKLGDPTTRRQVV.

The next 6 membrane-spanning stretches (helical) occupy residues 21–36 (SVHI…WAGS), 101–115 (IVFS…IWHW), 140–156 (GIHL…FGAF), 203–218 (IAAG…FHLS), 237–252 (VLSS…AFVV), and 457–472 (SFAL…HGAR).

It belongs to the PsbB/PsbC family. PsbB subfamily. PSII is composed of 1 copy each of membrane proteins PsbA, PsbB, PsbC, PsbD, PsbE, PsbF, PsbH, PsbI, PsbJ, PsbK, PsbL, PsbM, PsbT, PsbX, PsbY, PsbZ, Psb30/Ycf12, at least 3 peripheral proteins of the oxygen-evolving complex and a large number of cofactors. It forms dimeric complexes. Binds multiple chlorophylls. PSII binds additional chlorophylls, carotenoids and specific lipids. is required as a cofactor.

The protein resides in the plastid. The protein localises to the chloroplast thylakoid membrane. Functionally, one of the components of the core complex of photosystem II (PSII). It binds chlorophyll and helps catalyze the primary light-induced photochemical processes of PSII. PSII is a light-driven water:plastoquinone oxidoreductase, using light energy to abstract electrons from H(2)O, generating O(2) and a proton gradient subsequently used for ATP formation. The chain is Photosystem II CP47 reaction center protein from Nymphaea alba (White water-lily).